Reading from the N-terminus, the 335-residue chain is Biotin synthase (335 aa).

In terms of domain architecture, Radical SAM core spans 47–276; the sequence is FYGKKVKLNM…SKEIRISGGR (230 aa). Residues Cys65, Cys69, and Cys72 each contribute to the [4Fe-4S] cluster site. 4 residues coordinate [2Fe-2S] cluster: Cys109, Cys141, Cys201, and Arg271.

This sequence belongs to the radical SAM superfamily. Biotin synthase family. As to quaternary structure, homodimer. Requires [4Fe-4S] cluster as cofactor. The cofactor is [2Fe-2S] cluster.

The enzyme catalyses (4R,5S)-dethiobiotin + (sulfur carrier)-SH + 2 reduced [2Fe-2S]-[ferredoxin] + 2 S-adenosyl-L-methionine = (sulfur carrier)-H + biotin + 2 5'-deoxyadenosine + 2 L-methionine + 2 oxidized [2Fe-2S]-[ferredoxin]. Its pathway is cofactor biosynthesis; biotin biosynthesis; biotin from 7,8-diaminononanoate: step 2/2. Its function is as follows. Catalyzes the conversion of dethiobiotin (DTB) to biotin by the insertion of a sulfur atom into dethiobiotin via a radical-based mechanism. This Bacillus subtilis (strain 168) protein is Biotin synthase.